We begin with the raw amino-acid sequence, 341 residues long: Hyaluronidase A (341 aa).

3 N-linked (GlcNAc...) asparagine glycosylation sites follow: Asn3, Asn68, and Asn83. Intrachain disulfides connect Cys23–Cys311 and Cys189–Cys201.

Belongs to the glycosyl hydrolase 56 family. In terms of tissue distribution, expressed by the venom gland.

Its subcellular location is the secreted. The enzyme catalyses Random hydrolysis of (1-&gt;4)-linkages between N-acetyl-beta-D-glucosamine and D-glucuronate residues in hyaluronate.. May hydrolyze high molecular weight hyaluronic acid to produce small oligosaccharides. In Vespa velutina (Asian yellow-legged hornet), this protein is Hyaluronidase A.